We begin with the raw amino-acid sequence, 291 residues long: Beta-lactamase OXY-1 (291 aa).

Positions 1 to 24 (MLKSSWRKTALMAAAAVPLLLASG) are cleaved as a signal peptide. The Acyl-ester intermediate role is filled by Ser73. A substrate-binding site is contributed by 237–239 (KTG).

The protein belongs to the class-A beta-lactamase family.

The catalysed reaction is a beta-lactam + H2O = a substituted beta-amino acid. Hydrolyzes broad-spectrum beta-lactam antibiotics. Active against cephalosporins. In Klebsiella oxytoca, this protein is Beta-lactamase OXY-1 (bla).